The chain runs to 517 residues: uncharacterized protein (517 aa).

3 disordered regions span residues 16–148 (KDES…TITK), 156–175 (VNKE…NTTT), and 216–351 (KLEK…EENE). Residues 48–75 (NNNNNNNNTTTTNNNTNNSNTSTSNNSK) show a composition bias toward low complexity. Residues 84 to 112 (FDDDDDDGDEEDEEEEDDDDDDDDDDDET) show a composition bias toward acidic residues. A compositionally biased stretch (pro residues) spans 127 to 143 (QPQPQPQPQPQPQPPIK). A compositionally biased stretch (polar residues) spans 236–252 (VSSTLSNSFDPNIIHNQ). Over residues 254-266 (SPPPPPISIPIPL) the composition is skewed to pro residues. Composition is skewed to low complexity over residues 271-320 (NLNN…NSNI) and 327-347 (SSSM…SNNN). Residues 340-452 (DNSSSNNNEE…HQNQQNSMNN (113 aa)) adopt a coiled-coil conformation.

This sequence belongs to the ENTR1 family.

This is an uncharacterized protein from Dictyostelium discoideum (Social amoeba).